Consider the following 173-residue polypeptide: Nascent polypeptide-associated complex subunit alpha (173 aa).

The NAC-A/B domain occupies 21-85 (VVHAEKAQKL…VTVEDMAAQA (65 aa)). Positions 89–117 (NESQKQATETKEEAAITEESGDAQPADTA) are disordered. The residue at position 122 (Ser-122) is a Phosphoserine. The 38-residue stretch at 134 to 171 (VDAKDIELVMAQANVSRAKAVTALKENNSDVVNAIMSL) folds into the UBA domain.

The protein belongs to the NAC-alpha family. As to quaternary structure, part of the nascent polypeptide-associated complex (NAC), consisting of ucp15 and btf3. NAC associates with ribosomes via btf3.

The protein resides in the cytoplasm. The protein localises to the nucleus. Functionally, component of the nascent polypeptide-associated complex (NAC), a dynamic component of the ribosomal exit tunnel, protecting the emerging polypeptides from interaction with other cytoplasmic proteins to ensure appropriate nascent protein targeting. The NAC complex also promotes mitochondrial protein import by enhancing productive ribosome interactions with the outer mitochondrial membrane and blocks the inappropriate interaction of ribosomes translating non-secretory nascent polypeptides with translocation sites in the membrane of the endoplasmic reticulum. Ucp15 may also be involved in transcription regulation. In Schizosaccharomyces pombe (strain 972 / ATCC 24843) (Fission yeast), this protein is Nascent polypeptide-associated complex subunit alpha (egd2).